The following is a 395-amino-acid chain: Probable beta-1,3-galactosyltransferase 8 (395 aa).

Residues 5–27 (AASGKAIIVLCLASFLAGSLFMS) traverse the membrane as a helical; Signal-anchor for type II membrane protein segment. Residue Asn117 is glycosylated (N-linked (GlcNAc...) asparagine).

It belongs to the glycosyltransferase 31 family. Mn(2+) is required as a cofactor.

Its subcellular location is the golgi apparatus membrane. It functions in the pathway protein modification; protein glycosylation. In terms of biological role, beta-1,3-galactosyltransferase that transfers galactose from UDP-galactose to substrates with a terminal glycosyl residue. The polypeptide is Probable beta-1,3-galactosyltransferase 8 (B3GALT8) (Arabidopsis thaliana (Mouse-ear cress)).